The primary structure comprises 137 residues: MEAALTKLDQEEKRALQAYYRCAWEETKNIINDFLEIPEERCTYKLNSYTKKMELLFTPEFHTAWQEVFECREFIINFLRLITGHRVVLKGPAIVFTKETKNLGIPSTINVDFQANIENMDDLQKGNLIGKMNIKEN.

It belongs to the asfivirus A137R family. In terms of assembly, interacts with host TBK1.

It is found in the virion. Its subcellular location is the host cytoplasm. Plays a role in the inhibition of the host innate immune response. Mechanistically, promotes the autophagy-mediated lysosomal degradation of host TBK1 and affects IRF3 nuclear translocation to block type I IFN production. This is Structural protein A137R from Ornithodoros (relapsing fever ticks).